The chain runs to 396 residues: NADH-quinone oxidoreductase subunit D 2 (396 aa).

The protein belongs to the complex I 49 kDa subunit family. In terms of assembly, NDH-1 is composed of 14 different subunits. Subunits NuoB, C, D, E, F, and G constitute the peripheral sector of the complex.

It is found in the cell inner membrane. It carries out the reaction a quinone + NADH + 5 H(+)(in) = a quinol + NAD(+) + 4 H(+)(out). Its function is as follows. NDH-1 shuttles electrons from NADH, via FMN and iron-sulfur (Fe-S) centers, to quinones in the respiratory chain. The immediate electron acceptor for the enzyme in this species is believed to be ubiquinone. Couples the redox reaction to proton translocation (for every two electrons transferred, four hydrogen ions are translocated across the cytoplasmic membrane), and thus conserves the redox energy in a proton gradient. This chain is NADH-quinone oxidoreductase subunit D 2, found in Beijerinckia indica subsp. indica (strain ATCC 9039 / DSM 1715 / NCIMB 8712).